The chain runs to 315 residues: ADP/ATP translocase 4 (315 aa).

Over 1 to 19 (MHREPAKKKAEKRLFDASS) the chain is Mitochondrial intermembrane. Residues 18–110 (SSFGKDLLAG…FAFKDKYKQL (93 aa)) form a Solcar 1 repeat. A helical membrane pass occupies residues 20 to 49 (FGKDLLAGGVAAAVSKTAVAPIERVKLLLQ). Topologically, residues 50 to 86 (VQASSKQISPEARYKGMVDCLVRIPREQGFFSFWRGN) are mitochondrial matrix. A helical membrane pass occupies residues 87 to 111 (LANVIRYFPTQALNFAFKDKYKQLF). ADP-binding residues include Arg92 and Lys104. At 112 to 121 (MSGVNKEKQF) the chain is on the mitochondrial intermembrane side. Residues 122–142 (WRWFLANLASGGAAGATSLCV) traverse the membrane as a helical segment. 2 Solcar repeats span residues 123-213 (RWFL…VKGL) and 220-307 (TPFL…IKEF). At 143–190 (VYPLDFARTRLGVDIGKGPEERQFKGLGDCIMKIAKSDGIAGLYQGFG) the chain is on the mitochondrial matrix side. The helical transmembrane segment at 191 to 211 (VSVQGIIVYRASYFGAYDTVK) threads the bilayer. Over 212-222 (GLLPKPKKTPF) the chain is Mitochondrial intermembrane. A helical membrane pass occupies residues 223–243 (LVSFFIAQVVTTCSGILSYPF). At 244 to 283 (DTVRRRMMMQSGEAKRQYKGTLDCFVKIYQHEGISSFFRG) the chain is on the mitochondrial matrix side. Position 247 (Arg247) interacts with ADP. The interval 247-252 (RRRMMM) is important for transport activity. The Nucleotide carrier signature motif motif lies at 247–252 (RRRMMM). Residues 284–301 (AFSNVLRGTGGALVLVLY) form a helical membrane-spanning segment. The Mitochondrial intermembrane portion of the chain corresponds to 302–315 (DKIKEFFHIDIGGR).

Belongs to the mitochondrial carrier (TC 2.A.29) family. Monomer. Expressed in brain, liver, sperm and testis. In testis, expressed at higher level in spermatocytes, while it is expressed at lower level in spermatogonial cells. Expressed in erythrocytes (at protein level).

It localises to the mitochondrion inner membrane. Its subcellular location is the membrane. The protein resides in the cell projection. The protein localises to the cilium. It is found in the flagellum membrane. It catalyses the reaction ADP(in) + ATP(out) = ADP(out) + ATP(in). The catalysed reaction is dATP(out) + ADP(in) = dATP(in) + ADP(out). It carries out the reaction dADP(in) + ADP(out) = dADP(out) + ADP(in). The enzyme catalyses H(+)(in) = H(+)(out). Its activity is regulated as follows. The matrix-open state (m-state) is inhibited by the membrane-permeable bongkrekic acid (BKA). The cytoplasmic-open state (c-state) is inhibited by the membrane-impermeable toxic inhibitor carboxyatractyloside (CATR). Proton transporter activity is inhibited by ADP:ATP antiporter activity. ADP:ATP antiporter that mediates import of ADP into the mitochondrial matrix for ATP synthesis, and export of ATP out to fuel the cell. Cycles between the cytoplasmic-open state (c-state) and the matrix-open state (m-state): operates by the alternating access mechanism with a single substrate-binding site intermittently exposed to either the cytosolic (c-state) or matrix (m-state) side of the inner mitochondrial membrane. Specifically required during spermatogenesis, probably to mediate ADP:ATP exchange in spermatocytes. Large ATP supplies from mitochondria may be critical for normal progression of spermatogenesis during early stages of meiotic prophase I, including DNA double-strand break repair and chromosomal synapsis. In addition to its ADP:ATP antiporter activity, also involved in mitochondrial uncoupling and mitochondrial permeability transition pore (mPTP) activity. Plays a role in mitochondrial uncoupling by acting as a proton transporter: proton transport uncouples the proton flows via the electron transport chain and ATP synthase to reduce the efficiency of ATP production and cause mitochondrial thermogenesis. Proton transporter activity is inhibited by ADP:ATP antiporter activity, suggesting that SLC25A31/ANT4 acts as a master regulator of mitochondrial energy output by maintaining a delicate balance between ATP production (ADP:ATP antiporter activity) and thermogenesis (proton transporter activity). Proton transporter activity requires free fatty acids as cofactor, but does not transport it. Among nucleotides, may also exchange ADP for dATP and dADP. Also plays a key role in mPTP opening, a non-specific pore that enables free passage of the mitochondrial membranes to solutes of up to 1.5 kDa, and which contributes to cell death. It is however unclear if SLC25A31/ANT4 constitutes a pore-forming component of mPTP or regulates it. The polypeptide is ADP/ATP translocase 4 (Homo sapiens (Human)).